The primary structure comprises 290 residues: Phosphoribosylaminoimidazole-succinocarboxamide synthase (290 aa).

It belongs to the SAICAR synthetase family.

It catalyses the reaction 5-amino-1-(5-phospho-D-ribosyl)imidazole-4-carboxylate + L-aspartate + ATP = (2S)-2-[5-amino-1-(5-phospho-beta-D-ribosyl)imidazole-4-carboxamido]succinate + ADP + phosphate + 2 H(+). The protein operates within purine metabolism; IMP biosynthesis via de novo pathway; 5-amino-1-(5-phospho-D-ribosyl)imidazole-4-carboxamide from 5-amino-1-(5-phospho-D-ribosyl)imidazole-4-carboxylate: step 1/2. This Haemophilus influenzae (strain ATCC 51907 / DSM 11121 / KW20 / Rd) protein is Phosphoribosylaminoimidazole-succinocarboxamide synthase (purC).